Reading from the N-terminus, the 258-residue chain is Gamma carbonic anhydrase 3, mitochondrial (258 aa).

The N-terminal 43 residues, Met-1–Arg-43, are a transit peptide targeting the mitochondrion. Residues Arg-86–Asp-88 and Gln-101–Asp-102 each bind substrate. Zn(2+)-binding residues include His-107, His-130, and His-135. Residue Asn-209 participates in substrate binding.

Belongs to the gamma-class carbonic anhydrase family. In terms of assembly, homotrimer. Component of the oxidoreductase respiratory chain complex I; element of the extra matrix-exposed domain, which is attached to the membrane arm of this complex. Zn(2+) serves as cofactor.

The protein resides in the mitochondrion membrane. Its function is as follows. Enzyme involved in the catabolism of H(2)CO(3) but that does not mediates the reversible hydration of carbon dioxide. Mediates complex I assembly in mitochondria and respiration. This is Gamma carbonic anhydrase 3, mitochondrial (GAMMACA3) from Arabidopsis thaliana (Mouse-ear cress).